Consider the following 518-residue polypeptide: Zinc finger protein 449 (518 aa).

The 83-residue stretch at 30–112 (RQRFRQFQYR…SLIEDLQREL (83 aa)) folds into the SCAN box domain. The span at 292 to 304 (NPTLGETPENSNL) shows a compositional bias: polar residues. The tract at residues 292–325 (NPTLGETPENSNLEEPLNPKPHKKKSPGEKPHRC) is disordered. 7 C2H2-type zinc fingers span residues 323-345 (HRCP…QRIH), 351-373 (HKCP…QRLH), 379-401 (YECT…QRTH), 407-429 (YKCL…LKTH), 435-457 (HRCH…QRTH), 463-485 (FKCN…LRIH), and 491-513 (YKCT…QVTH).

This sequence belongs to the krueppel C2H2-type zinc-finger protein family.

It localises to the nucleus. Functionally, may be involved in transcriptional regulation. This Gorilla gorilla gorilla (Western lowland gorilla) protein is Zinc finger protein 449 (ZNF449).